Here is a 267-residue protein sequence, read N- to C-terminus: Glutamate racemase (267 aa).

Substrate is bound by residues aspartate 10 to serine 11 and tyrosine 42 to glycine 43. Residue cysteine 73 is the Proton donor/acceptor of the active site. Asparagine 74 to threonine 75 provides a ligand contact to substrate. Residue cysteine 183 is the Proton donor/acceptor of the active site. Residue threonine 184–histidine 185 participates in substrate binding.

Belongs to the aspartate/glutamate racemases family.

It carries out the reaction L-glutamate = D-glutamate. It functions in the pathway cell wall biogenesis; peptidoglycan biosynthesis. In terms of biological role, provides the (R)-glutamate required for cell wall biosynthesis. The chain is Glutamate racemase from Lactobacillus helveticus (strain DPC 4571).